Consider the following 906-residue polypeptide: Glutamate receptor 1 (906 aa).

The first 18 residues, 1-18 (MQHIFAFFCTGFLGAVVG), serve as a signal peptide directing secretion. The Extracellular portion of the chain corresponds to 19-536 (ANFPNNIQIG…GVFSFLDPLA (518 aa)). N-linked (GlcNAc...) asparagine glycans are attached at residues Asn63, Asn249, Asn257, Asn363, Asn401, and Asn406. The cysteines at positions 75 and 323 are disulfide-linked. L-glutamate-binding residues include Pro492, Thr494, and Arg499. Residues 537 to 557 (YEIWMCIVFAYIGVSVVLFLV) traverse the membrane as a helical segment. The Cytoplasmic portion of the chain corresponds to 558 to 584 (SRFSPYEWHSEEFEEGRDQTTSDQSNE). Positions 585-600 (FGIFNSLWFSLGAFMQ) form an intramembrane region, helical; Pore-forming. The stretch at 601–603 (QGC) is an intramembrane region. The S-palmitoyl cysteine moiety is linked to residue Cys603. Residues 604–609 (DISPRS) are Cytoplasmic-facing. A helical transmembrane segment spans residues 610–630 (LSGRIVGGVWWFFTLIIISSY). Topologically, residues 631 to 805 (TANLAAFLTV…DKTSALSLSN (175 aa)) are extracellular. Ser645 is subject to Phosphoserine. Ser668 and Thr669 together coordinate L-glutamate. Residue Ser710 is modified to Phosphoserine. Position 719 (Glu719) interacts with L-glutamate. Cys732 and Cys787 are joined by a disulfide. A helical transmembrane segment spans residues 806-826 (VAGVFYILIGGLGLAMLVALI). Residues 827–906 (EFCYKSRSES…SGMPLGATGL (80 aa)) are Cytoplasmic-facing. Residue Cys829 is the site of S-palmitoyl cysteine attachment. A phosphoserine mark is found at Ser849 and Ser863. A disordered region spans residues 861 to 880 (RNSGAGASSAGSGENGRVVS). Low complexity predominate over residues 863–872 (SGAGASSAGS). Positions 903–906 (ATGL) match the PDZ-binding motif.

The protein belongs to the glutamate-gated ion channel (TC 1.A.10.1) family. GRIA1 subfamily. Homotetramer or heterotetramer of pore-forming glutamate receptor subunits; heteromeric assembly can be the result of both receptor subtype and flip-flop forms and according the composition, one partner can be dominant with respect to the fast desensitizing current component, whereas the other can determine the steady-state component. Tetramers may be formed by the dimerization of dimers. Found in a complex with GRIA2, GRIA3, GRIA4, CNIH2, CNIH3, CACNG2, CACNG3, CACNG4, CACNG5, CACNG7 and CACNG8. Interacts with HIP1 and RASGRF2. Interacts with SYNDIG1 and GRIA2. Interacts with DLG1 (via C-terminus). Interacts with LRFN1. Interacts with PRKG2. Interacts with CNIH2 and CACNG2. Interacts with CACNG5; this interaction modulates the gating. Interacts (via C-terminus) with PDLIM4 (via LIM domain); this interaction as well as the interaction of PDLIM4 with alpha-actinin is required for their colocalization in early endosomes. Interacts with SNX27 (via PDZ domain); the interaction is required for recycling to the plasma membrane when endocytosed and prevent degradation in lysosomes. Interacts (via PDZ-binding motif) with SHANK3 (via PDZ domain). Interacts with CACNG3; associates GRIA1 with the adapter protein complex 4 (AP-4) to target GRIA1 to the somatodendritic compartment of neurons. Interacts with CACNG2; this interaction mediates traffick to the plasma membrane and modulation of desensitization. Interaction with CNIH2 and CNIH3; this interaction promotes expression at the plasma membrane and extensively modulates their gating properties by slowing deactivation and desensitization kinetics. Found in a complex with GRIA2, GRIA3, GRIA4, DLG4, CACNG8 and CNIH2. Post-translationally, phosphorylated at Ser-645. Phosphorylated at Ser-710 by PKC. Phosphorylated at Ser-849 by PKC, PKA and CAMK2. Phosphorylated at Ser-863 by PKC, PKA and PRKG2. Phosphorylation of Ser-863 is reduced by induction of long-term depression and increased by induction of long-term potentiation. In terms of processing, palmitoylated. Depalmitoylated by CPT1C and upon L-glutamate stimulation. ZDHHC3/GODZ specifically palmitoylates Cys-603, which leads to Golgi retention and decreased cell surface expression. In contrast, Cys-829 palmitoylation does not affect cell surface expression but regulates stimulation-dependent endocytosis.

It is found in the cell membrane. Its subcellular location is the endoplasmic reticulum membrane. It localises to the postsynaptic cell membrane. The protein resides in the postsynaptic density membrane. The protein localises to the cell projection. It is found in the dendrite. Its subcellular location is the dendritic spine. It localises to the early endosome membrane. The protein resides in the recycling endosome membrane. The protein localises to the presynapse. It is found in the synapse. It catalyses the reaction Ca(2+)(in) = Ca(2+)(out). The enzyme catalyses Na(+)(in) = Na(+)(out). The catalysed reaction is Mg(2+)(in) = Mg(2+)(out). It carries out the reaction Li(+)(in) = Li(+)(out). It catalyses the reaction K(+)(in) = K(+)(out). The enzyme catalyses Sr(2+)(in) = Sr(2+)(out). Functionally, ionotropic glutamate receptor that functions as a ligand-gated cation channel, gated by L-glutamate and glutamatergic agonists such as alpha-amino-3-hydroxy-5-methyl-4-isoxazolepropionic acid (AMPA), quisqualic acid, and kainic acid. L-glutamate acts as an excitatory neurotransmitter at many synapses in the central nervous system. Binding of the excitatory neurotransmitter L-glutamate induces a conformation change, leading to the opening of the cation channel, and thereby converts the chemical signal to an electrical impulse upon entry of monovalent and divalent cations such as sodium and calcium. The receptor then desensitizes rapidly and enters in a transient inactive state, characterized by the presence of bound agonist. In the presence of CACNG2 or CACNG4 or CACNG7 or CACNG8, shows resensitization which is characterized by a delayed accumulation of current flux upon continued application of L-glutamate. Calcium (Ca(2+)) permeability depends on subunits composition and, heteromeric channels containing edited GRIA2 subunit are calcium-impermeable. Also permeable to other divalents cations such as strontium(2+) and magnesium(2+) and monovalent cations such as potassium(1+) and lithium(1+). This chain is Glutamate receptor 1, found in Macaca fascicularis (Crab-eating macaque).